Consider the following 302-residue polypeptide: UDP-N-acetylenolpyruvoylglucosamine reductase (302 aa).

The FAD-binding PCMH-type domain occupies 32 to 195 (LGGPADLLAR…VTVTLELVPD (164 aa)). Arginine 175 is an active-site residue. Residue serine 224 is the Proton donor of the active site. The active site involves glutamate 294.

Belongs to the MurB family. Requires FAD as cofactor.

The protein localises to the cytoplasm. It catalyses the reaction UDP-N-acetyl-alpha-D-muramate + NADP(+) = UDP-N-acetyl-3-O-(1-carboxyvinyl)-alpha-D-glucosamine + NADPH + H(+). It participates in cell wall biogenesis; peptidoglycan biosynthesis. Its function is as follows. Cell wall formation. In Moorella thermoacetica (strain ATCC 39073 / JCM 9320), this protein is UDP-N-acetylenolpyruvoylglucosamine reductase.